The chain runs to 164 residues: Lipoprotein signal peptidase (164 aa).

The next 4 helical transmembrane spans lie at 11 to 31, 41 to 61, 64 to 84, and 92 to 112; these read YWVL…AVLS, VIPS…FSFL, QGGW…AYLV, and FAAL…GNVI. Residues aspartate 122 and aspartate 140 contribute to the active site. The chain crosses the membrane as a helical span at residues 132 to 152; it reads FYPAFNIADSFICVGAVLAVL.

The protein belongs to the peptidase A8 family.

The protein resides in the cell inner membrane. The enzyme catalyses Release of signal peptides from bacterial membrane prolipoproteins. Hydrolyzes -Xaa-Yaa-Zaa-|-(S,diacylglyceryl)Cys-, in which Xaa is hydrophobic (preferably Leu), and Yaa (Ala or Ser) and Zaa (Gly or Ala) have small, neutral side chains.. It functions in the pathway protein modification; lipoprotein biosynthesis (signal peptide cleavage). In terms of biological role, this protein specifically catalyzes the removal of signal peptides from prolipoproteins. The sequence is that of Lipoprotein signal peptidase from Neisseria gonorrhoeae (strain ATCC 700825 / FA 1090).